A 616-amino-acid polypeptide reads, in one-letter code: Dihydroxy-acid dehydratase (616 aa).

D81 provides a ligand contact to Mg(2+). Residue C122 coordinates [2Fe-2S] cluster. Positions 123 and 124 each coordinate Mg(2+). The residue at position 124 (K124) is an N6-carboxylysine. C195 serves as a coordination point for [2Fe-2S] cluster. E491 lines the Mg(2+) pocket. The Proton acceptor role is filled by S517.

This sequence belongs to the IlvD/Edd family. In terms of assembly, homodimer. [2Fe-2S] cluster is required as a cofactor. Requires Mg(2+) as cofactor.

It carries out the reaction (2R)-2,3-dihydroxy-3-methylbutanoate = 3-methyl-2-oxobutanoate + H2O. The catalysed reaction is (2R,3R)-2,3-dihydroxy-3-methylpentanoate = (S)-3-methyl-2-oxopentanoate + H2O. It functions in the pathway amino-acid biosynthesis; L-isoleucine biosynthesis; L-isoleucine from 2-oxobutanoate: step 3/4. It participates in amino-acid biosynthesis; L-valine biosynthesis; L-valine from pyruvate: step 3/4. Functions in the biosynthesis of branched-chain amino acids. Catalyzes the dehydration of (2R,3R)-2,3-dihydroxy-3-methylpentanoate (2,3-dihydroxy-3-methylvalerate) into 2-oxo-3-methylpentanoate (2-oxo-3-methylvalerate) and of (2R)-2,3-dihydroxy-3-methylbutanoate (2,3-dihydroxyisovalerate) into 2-oxo-3-methylbutanoate (2-oxoisovalerate), the penultimate precursor to L-isoleucine and L-valine, respectively. The polypeptide is Dihydroxy-acid dehydratase (Pectobacterium carotovorum subsp. carotovorum (strain PC1)).